The chain runs to 344 residues: Anthranilate phosphoribosyltransferase (344 aa).

Residues G84, 87 to 88 (GD), T92, 94 to 97 (NIST), 112 to 120 (KHGGRSVSS), and S124 contribute to the 5-phospho-alpha-D-ribose 1-diphosphate site. G84 serves as a coordination point for anthranilate. S96 contacts Mg(2+). R170 contributes to the anthranilate binding site. Mg(2+) contacts are provided by D229 and E230.

Belongs to the anthranilate phosphoribosyltransferase family. As to quaternary structure, homodimer. It depends on Mg(2+) as a cofactor.

The catalysed reaction is N-(5-phospho-beta-D-ribosyl)anthranilate + diphosphate = 5-phospho-alpha-D-ribose 1-diphosphate + anthranilate. Its pathway is amino-acid biosynthesis; L-tryptophan biosynthesis; L-tryptophan from chorismate: step 2/5. Catalyzes the transfer of the phosphoribosyl group of 5-phosphorylribose-1-pyrophosphate (PRPP) to anthranilate to yield N-(5'-phosphoribosyl)-anthranilate (PRA). This Janthinobacterium sp. (strain Marseille) (Minibacterium massiliensis) protein is Anthranilate phosphoribosyltransferase.